Reading from the N-terminus, the 231-residue chain is Small ribosomal subunit protein bS18c (231 aa).

2 disordered regions span residues 1 to 31 (MEKS…PIES) and 95 to 231 (QKEE…TRKK). Residues 9-26 (IKKKRPFRKKKRSFRKRR) show a composition bias toward basic residues. Composition is skewed to basic and acidic residues over residues 95–151 (QKEE…EFQR), 159–169 (TNEKQTNEKQT), and 212–231 (TNEK…TRKK).

It belongs to the bacterial ribosomal protein bS18 family. Part of the 30S ribosomal subunit.

The protein localises to the plastid. It localises to the chloroplast. The protein is Small ribosomal subunit protein bS18c of Jasminum nudiflorum (Winter jasmine).